A 396-amino-acid chain; its full sequence is Jacalin-related lectin 45 (396 aa).

3 consecutive Jacalin-type lectin domains span residues lysine 3–histidine 138, glutamine 144–valine 264, and valine 270–proline 392.

It belongs to the jacalin lectin family.

This is Jacalin-related lectin 45 (JAL45) from Arabidopsis thaliana (Mouse-ear cress).